A 306-amino-acid polypeptide reads, in one-letter code: MTSIEDLISNPPLLLHSSLSQLRYLILSEGLPISEDKQQQRTRCYVWTVLSQTSMEASTQRYLALLKLGPPSTTIYQKIKNDTSRTFQTDPNFRNRVSEDALIRCLSCFAWQTQQRRQKTRFGRIPVSTYVQGMNVLLAPLLYSCPSEPMAYQLFTKLCYEMIPTYLTKNLNGAQNGAKLLDISLRIIDPKLSKFLSDNLLTAEIYGMPSILTLSSCNKPLDQVIKLWDFMFAYGFHMNILFVVAFLVKMRSKVFKSDSPVNLLRQFPDFDADEIIRLGVGFIAKIPAQIYDLLVDHLTDPDIYIP.

A Rab-GAP TBC domain is found at 37 to 235; the sequence is KQQQRTRCYV…KLWDFMFAYG (199 aa).

It belongs to the BUB2 family. Interacts with BFA1.

It is found in the cytoplasm. The protein localises to the cytoskeleton. Its subcellular location is the spindle pole. Its function is as follows. Part of a checkpoint which monitors spindle integrity and prevents premature exit from mitosis. This cell-cycle arrest depends upon inhibition of the GTP-binding protein TEM1 by the BFA1/BUB2 complex. This chain is Mitotic check point protein BUB2 (BUB2), found in Saccharomyces cerevisiae (strain ATCC 204508 / S288c) (Baker's yeast).